The chain runs to 150 residues: Large ribosomal subunit protein uL13 (150 aa).

A disordered region spans residues 128–150 (GSDHPHSAQEPKILSLNSESVTK).

The protein belongs to the universal ribosomal protein uL13 family. Part of the 50S ribosomal subunit.

Functionally, this protein is one of the early assembly proteins of the 50S ribosomal subunit, although it is not seen to bind rRNA by itself. It is important during the early stages of 50S assembly. The chain is Large ribosomal subunit protein uL13 from Prochlorococcus marinus (strain NATL1A).